We begin with the raw amino-acid sequence, 108 residues long: AITDILSAKDIEAALSSVKAAESFNYKTFFTKCGLAGKPTDQVKKVFDILDQDKSGYIEEDELQLFLKNFCSSARSLSNAETKAFLFAGDSDGDGKIGVDEFQALVRS.

EF-hand domains lie at 38–73 (KPTD…FCSS) and 77–108 (LSNA…LVRS). Residues D51, D53, S55, Y57, E59, E62, D90, D92, D94, K96, and E101 each contribute to the Ca(2+) site.

It belongs to the parvalbumin family.

In terms of biological role, in muscle, parvalbumin is thought to be involved in relaxation after contraction. It binds two calcium ions. The protein is Parvalbumin beta of Amphiuma means (Salamander).